A 261-amino-acid polypeptide reads, in one-letter code: 5'-nucleotidase SurE (261 aa).

Residues D8, D9, S39, and N91 each coordinate a divalent metal cation.

The protein belongs to the SurE nucleotidase family. Requires a divalent metal cation as cofactor.

The protein resides in the cytoplasm. The catalysed reaction is a ribonucleoside 5'-phosphate + H2O = a ribonucleoside + phosphate. Nucleotidase that shows phosphatase activity on nucleoside 5'-monophosphates. The protein is 5'-nucleotidase SurE of Polaromonas sp. (strain JS666 / ATCC BAA-500).